Consider the following 344-residue polypeptide: Methylthioribose-1-phosphate isomerase (344 aa).

Residues 55-57 (RGA), Arg98, and Gln202 each bind substrate. Asp243 functions as the Proton donor in the catalytic mechanism. Residue 253–254 (NK) participates in substrate binding.

This sequence belongs to the eIF-2B alpha/beta/delta subunits family. MtnA subfamily.

The enzyme catalyses 5-(methylsulfanyl)-alpha-D-ribose 1-phosphate = 5-(methylsulfanyl)-D-ribulose 1-phosphate. It functions in the pathway amino-acid biosynthesis; L-methionine biosynthesis via salvage pathway; L-methionine from S-methyl-5-thio-alpha-D-ribose 1-phosphate: step 1/6. Functionally, catalyzes the interconversion of methylthioribose-1-phosphate (MTR-1-P) into methylthioribulose-1-phosphate (MTRu-1-P). This chain is Methylthioribose-1-phosphate isomerase, found in Gemmatimonas aurantiaca (strain DSM 14586 / JCM 11422 / NBRC 100505 / T-27).